An 837-amino-acid chain; its full sequence is MGKTQKKNSKGRLDRYYYLAKEKGYRARSSFKIIQINEKFGHFLEKSKVVIDLCAAPGSWCQVASKLCPVNSLIIGVDIVPMKPMPNVITFQSDITTEDCRSRLRGYMKTWKADTVLHDGAPNVGLGWAQDAFTQSHLTLQALKLAVENLVVNGTFVTKIFRSKDYNKLIWVFQQLFEKVEATKPPASRNVSAEIFVVCKGFKAPKKLDPRLLDPKEVFEELPDGPQNMEAKIYNPEKKVRKRQGYEEGDHLLYHECSVLDFVKSEDPITVLGEMNKFTVEQDDPEWKILKRLKQTTNEFMACIEDLKVLGKKDFKMLLKWRKASRDILGLDKDEDKGDIEIEPLNEEEQIEKELRDLQEKQKQKQKREKRRKNEEKQKELTRMQMNMLTPTDIGIEAANIGRDSLFNLKTAEKTGILDKLAKGKKRVIFTEDEIAQDNDLHIDENIVIRDRHDMNEVDDLEGELNAMYQDYKNRKAERDANFRAKQARGGDVEDEWTGFEGTKDSEDENNEPKDYIESDDSELSDEDDDEAINQLISKLKSQNNGSKLSSQAKALFSNPLFENVQPILQSKTDDVVDSESVGDATKISNKRSYNEMKKEDLSDSSDEDSSSESDFEIVANDESDGDIDSDYDSDEERKRTTKEKYDKDIDIATVEAMTLAHQLALGQRSKHDLVDEGFNRYAFRDTENLPEWFLEEEKQHSKVNRPITKEAVMALKEKMKALNARPIKKVAEARARKKMRAVKRLEKIKKKAGLINDDSDKSEKDKAEEIAKLMRKVTKKQKTKPKVTLVVAHGKNKGLSGRPKGIKGKYKMVDGVLKNEQRALKRIAKKHHKKKK.

Residues Gly-58, Trp-60, Asp-78, Asp-94, and Asp-119 each contribute to the S-adenosyl-L-methionine site. Residue Lys-159 is the Proton acceptor of the active site. Positions 345–390 (LNEEEQIEKELRDLQEKQKQKQKREKRRKNEEKQKELTRMQMNMLT) form a coiled coil. Disordered stretches follow at residues 359–381 (QEKQ…QKEL), 483–529 (FRAK…DEDD), 573–644 (TDDV…TTKE), and 779–808 (TKKQ…KGIK). A compositionally biased stretch (basic and acidic residues) spans 372-381 (RKNEEKQKEL). A compositionally biased stretch (acidic residues) spans 518-529 (ESDDSELSDEDD). Over residues 593-602 (SYNEMKKEDL) the composition is skewed to basic and acidic residues. Residues 603-635 (SDSSDEDSSSESDFEIVANDESDGDIDSDYDSD) are compositionally biased toward acidic residues.

This sequence belongs to the class I-like SAM-binding methyltransferase superfamily. RNA methyltransferase RlmE family. SPB1 subfamily. Component of the nucleolar and nucleoplasmic pre-60S ribosomal particle.

The protein resides in the nucleus. The protein localises to the nucleolus. The enzyme catalyses a ribonucleotide in rRNA + S-adenosyl-L-methionine = a 2'-O-methylribonucleotide in rRNA + S-adenosyl-L-homocysteine + H(+). Required for proper assembly of pre-ribosomal particles during the biogenesis of the 60S ribosomal subunit. The polypeptide is AdoMet-dependent rRNA methyltransferase SPB1 (Candida glabrata (strain ATCC 2001 / BCRC 20586 / JCM 3761 / NBRC 0622 / NRRL Y-65 / CBS 138) (Yeast)).